Consider the following 612-residue polypeptide: Siderophore iron transporter 1 (612 aa).

Phosphoserine is present on residues Ser-5, Ser-21, Ser-22, Ser-36, and Ser-41. Transmembrane regions (helical) follow at residues 91 to 111 (ISFYICYFSIFLLFFAISFQA), 125 to 145 (FAGHSLLSTIAVANNIISAAI), 159 to 179 (LEAFLFSLLLYLVGLILMAAS), 188 to 208 (GSVLYNAGYTGVELIMTIFMA), 218 to 238 (LVLGISYLPFVVTIWIGPRVA), 249 to 269 (WGIAVWTILIPACSIPFLAVY), 299 to 319 (IIGLILMTAGLALVLLSISLA), 331 to 351 (FIVMIIIGGLCLIAFVLYEIF), 365 to 385 (EPTIGACCAMSFLFYITFYCW), 406 to 426 (YISYTYSFTSCATGFFLGILI), 434 to 453 (WYFVASIPVYILGQGLMIRY), 464 to 484 (IMPQIIVGIGGGVIANLLTVA), 495 to 515 (AIVTALVSTVTPIGGAVGSAI), and 573 to 593 (ILTSVATGFAGAMIFPVWFVA).

Belongs to the major facilitator superfamily.

It localises to the membrane. Its function is as follows. Involved in the transport of siderophore iron and so has a role in iron homeostasis. In Schizosaccharomyces pombe (strain 972 / ATCC 24843) (Fission yeast), this protein is Siderophore iron transporter 1 (str1).